Reading from the N-terminus, the 225-residue chain is Transmembrane protein C16orf54 homolog (225 aa).

Residues 34-54 (IPIMLGLASLTAFFIITTAVL) traverse the membrane as a helical segment. Residues 107–149 (RAPDPPTPGGTLEGRATAPPAIPTPHPSPSSLVPQTPPEVPAQ) form a disordered region. A phosphothreonine mark is found at Thr-113 and Thr-117. A Phosphoserine modification is found at Ser-195.

Its subcellular location is the membrane. This is Transmembrane protein C16orf54 homolog from Rattus norvegicus (Rat).